Reading from the N-terminus, the 282-residue chain is Pantothenate synthetase (282 aa).

Residue 30 to 37 coordinates ATP; that stretch reads MGYLHEGH. His37 serves as the catalytic Proton donor. Gln61 is a (R)-pantoate binding site. Gln61 lines the beta-alanine pocket. 148–151 lines the ATP pocket; the sequence is GQKD. Gln154 serves as a coordination point for (R)-pantoate. ATP-binding positions include Val177 and 185-188; that span reads MSSR.

The protein belongs to the pantothenate synthetase family. Homodimer.

Its subcellular location is the cytoplasm. The catalysed reaction is (R)-pantoate + beta-alanine + ATP = (R)-pantothenate + AMP + diphosphate + H(+). It participates in cofactor biosynthesis; (R)-pantothenate biosynthesis; (R)-pantothenate from (R)-pantoate and beta-alanine: step 1/1. Functionally, catalyzes the condensation of pantoate with beta-alanine in an ATP-dependent reaction via a pantoyl-adenylate intermediate. The polypeptide is Pantothenate synthetase (Syntrophomonas wolfei subsp. wolfei (strain DSM 2245B / Goettingen)).